An 871-amino-acid polypeptide reads, in one-letter code: DNA mismatch repair protein MutS (871 aa).

621-628 (GPNMAGKS) lines the ATP pocket.

This sequence belongs to the DNA mismatch repair MutS family.

In terms of biological role, this protein is involved in the repair of mismatches in DNA. It is possible that it carries out the mismatch recognition step. This protein has a weak ATPase activity. This is DNA mismatch repair protein MutS from Geobacter sulfurreducens (strain ATCC 51573 / DSM 12127 / PCA).